Consider the following 61-residue polypeptide: Small ribosomal subunit protein uS14 (61 aa).

Residues Cys24, Cys27, Cys40, and Cys43 each contribute to the Zn(2+) site.

This sequence belongs to the universal ribosomal protein uS14 family. Zinc-binding uS14 subfamily. In terms of assembly, part of the 30S ribosomal subunit. Contacts proteins S3 and S10. Zn(2+) serves as cofactor.

Binds 16S rRNA, required for the assembly of 30S particles and may also be responsible for determining the conformation of the 16S rRNA at the A site. The chain is Small ribosomal subunit protein uS14 from Desulforamulus reducens (strain ATCC BAA-1160 / DSM 100696 / MI-1) (Desulfotomaculum reducens).